Here is a 215-residue protein sequence, read N- to C-terminus: Large ribosomal subunit protein uL4 (215 aa).

Residues 46–76 form a disordered region; that stretch reads TAKSKNRAEVSGGGRKPWAQKGGGRARAGSI. Gly residues predominate over residues 56–71; that stretch reads SGGGRKPWAQKGGGRA.

Belongs to the universal ribosomal protein uL4 family. Part of the 50S ribosomal subunit.

Functionally, one of the primary rRNA binding proteins, this protein initially binds near the 5'-end of the 23S rRNA. It is important during the early stages of 50S assembly. It makes multiple contacts with different domains of the 23S rRNA in the assembled 50S subunit and ribosome. In terms of biological role, forms part of the polypeptide exit tunnel. This is Large ribosomal subunit protein uL4 from Helicobacter acinonychis (strain Sheeba).